The sequence spans 288 residues: Diaminopimelate epimerase (288 aa).

Positions 13, 51, and 71 each coordinate substrate. Cysteine 80 serves as the catalytic Proton donor. Substrate is bound by residues 81 to 82 (GN), asparagine 166, asparagine 200, and 218 to 219 (ER). The Proton acceptor role is filled by cysteine 227. Substrate is bound at residue 228 to 229 (GT).

It belongs to the diaminopimelate epimerase family. As to quaternary structure, homodimer.

Its subcellular location is the cytoplasm. It carries out the reaction (2S,6S)-2,6-diaminopimelate = meso-2,6-diaminopimelate. The protein operates within amino-acid biosynthesis; L-lysine biosynthesis via DAP pathway; DL-2,6-diaminopimelate from LL-2,6-diaminopimelate: step 1/1. Functionally, catalyzes the stereoinversion of LL-2,6-diaminopimelate (L,L-DAP) to meso-diaminopimelate (meso-DAP), a precursor of L-lysine and an essential component of the bacterial peptidoglycan. The sequence is that of Diaminopimelate epimerase from Caulobacter vibrioides (strain ATCC 19089 / CIP 103742 / CB 15) (Caulobacter crescentus).